A 421-amino-acid chain; its full sequence is Imidazolonepropionase (421 aa).

Fe(3+) contacts are provided by His81 and His83. The Zn(2+) site is built by His81 and His83. Positions 90, 153, and 186 each coordinate 4-imidazolone-5-propanoate. N-formimidoyl-L-glutamate is bound at residue Tyr153. His251 is a binding site for Fe(3+). His251 contacts Zn(2+). Glu254 contributes to the 4-imidazolone-5-propanoate binding site. Residue Asp326 participates in Fe(3+) binding. Residue Asp326 coordinates Zn(2+). N-formimidoyl-L-glutamate-binding residues include Asn328 and Gly330. Ser331 contacts 4-imidazolone-5-propanoate.

It belongs to the metallo-dependent hydrolases superfamily. HutI family. The cofactor is Zn(2+). Fe(3+) serves as cofactor.

The protein resides in the cytoplasm. It catalyses the reaction 4-imidazolone-5-propanoate + H2O = N-formimidoyl-L-glutamate. It participates in amino-acid degradation; L-histidine degradation into L-glutamate; N-formimidoyl-L-glutamate from L-histidine: step 3/3. Functionally, catalyzes the hydrolytic cleavage of the carbon-nitrogen bond in imidazolone-5-propanoate to yield N-formimidoyl-L-glutamate. It is the third step in the universal histidine degradation pathway. This chain is Imidazolonepropionase, found in Streptococcus gordonii (strain Challis / ATCC 35105 / BCRC 15272 / CH1 / DL1 / V288).